The sequence spans 245 residues: Complement C1q subcomponent subunit A (245 aa).

Residues 1–22 (METSQGWLVACVLAVTLVWTVA) form the signal peptide. The Collagen-like domain occupies 31-109 (GKDGVAGIPG…KGVKGNPGNI (79 aa)). The tract at residues 35–111 (VAGIPGRPGR…VKGNPGNIRD (77 aa)) is disordered. Proline 39 and proline 45 each carry 4-hydroxyproline. Lysine 48 bears the 5-hydroxylysine mark. O-linked (Gal...) hydroxylysine glycosylation occurs at lysine 48. At proline 54 the chain carries 4-hydroxyproline. Lysine 67 carries the post-translational modification 5-hydroxylysine. An O-linked (Gal...) hydroxylysine glycan is attached at lysine 67. Residues proline 79 and proline 85 each carry the 4-hydroxyproline modification. Lysine 100 carries the post-translational modification 5-hydroxylysine. Lysine 100 carries an O-linked (Gal...) hydroxylysine glycan. Residues 110–245 (RDQPRPAFSA…FSGFLIFPSA (136 aa)) form the C1q domain. An N-linked (GlcNAc...) asparagine glycan is attached at asparagine 146. Cysteine 172 and cysteine 190 are oxidised to a cystine. A Ca(2+)-binding site is contributed by glutamine 199.

Core component of the complement C1 complex, a calcium-dependent complex composed of 1 molecule of the C1Q subcomplex, 2 molecules of C1R and 2 molecules of C1S. The C1Q subcomplex is composed 18 subunits: 3 chains of C1QA, C1QB, and C1QC trimerize to form 6 collagen-like triple helices connected to six globular ligand-recognition modules (C1q domain). Interacts with CR1 (via Sushi 24 and Sushi 25 domains). Interacts (via C-terminus) with CD33; this interaction activates CD33 inhibitory motifs. Post-translationally, O-linked glycans are assumed to be the Glc-Gal disaccharides typically found as secondary modifications of hydroxylated lysines in collagen-like domains.

The protein resides in the secreted. It localises to the cell surface. The C1Q subcomplex is inhibited by sulfated molecules, such as triterpenoid sulfates, heparan sulfate, or chondroitin sulfates. Its function is as follows. Core component of the complement C1 complex, a multiprotein complex that initiates the classical pathway of the complement system, a cascade of proteins that leads to phagocytosis and breakdown of pathogens and signaling that strengthens the adaptive immune system. The classical complement pathway is initiated by the C1Q subcomplex of the C1 complex, which specifically binds IgG or IgM immunoglobulins complexed with antigens, forming antigen-antibody complexes on the surface of pathogens: C1QA, together with C1QB and C1QC, specifically recognizes and binds the Fc regions of IgG or IgM via its C1q domain. Immunoglobulin-binding activates the proenzyme C1R, which cleaves C1S, initiating the proteolytic cascade of the complement system. The C1Q subcomplex is activated by a hexamer of IgG complexed with antigens, while it is activated by a pentameric IgM. The C1Q subcomplex also recognizes and binds phosphatidylserine exposed on the surface of cells undergoing programmed cell death, possibly promoting activation of the complement system. This chain is Complement C1q subcomponent subunit A, found in Rattus norvegicus (Rat).